Consider the following 383-residue polypeptide: Microtubule-associated protein tau (383 aa).

The span at Met-1–Glu-27 shows a compositional bias: basic and acidic residues. The disordered stretch occupies residues Met-1–Val-198. Ala-2 is subject to N-acetylalanine. Tyr-18 and Tyr-29 each carry phosphotyrosine. Lys-44 participates in a covalent cross-link: Glycyl lysine isopeptide (Lys-Gly) (interchain with G-Cter in ubiquitin). Residue Thr-53 is modified to Phosphothreonine. Over residues Lys-72–Thr-91 the composition is skewed to basic and acidic residues. Phosphothreonine is present on Thr-95. Arg-97 carries the omega-N-methylarginine modification. N6,N6-dimethyllysine; alternate is present on Lys-105. Residue Lys-105 is modified to N6-acetyllysine; alternate. Residues Thr-111, Thr-117, and Thr-123 each carry the phosphothreonine modification. Over residues Lys-116–Gly-128 the composition is skewed to pro residues. Ser-127, Ser-133, and Ser-137 each carry phosphoserine. Residues Glu-129–Ser-156 show a composition bias toward low complexity. Residue Tyr-139 is modified to Phosphotyrosine. 3 positions are modified to phosphoserine: Ser-140, Ser-141, and Ser-144. Phosphothreonine occurs at positions 147 and 154. The residue at position 156 (Ser-156) is a Phosphoserine. Residue Thr-159 is modified to Phosphothreonine. Lys-167 bears the N6-acetyllysine mark. At Thr-173 the chain carries Phosphothreonine. Ser-177 and Ser-179 each carry phosphoserine. 4 Tau/MAP repeats span residues Gln-186–Lys-216, Val-217–Ser-247, Val-248–Gln-278, and Val-279–Asn-310. Residue Lys-196 forms a Glycyl lysine isopeptide (Lys-Gly) (interchain with G-Cter in ubiquitin) linkage. Lys-201 is subject to N6-acetyllysine; alternate. Lys-201 carries the N6-methyllysine; alternate modification. Residue Lys-201 forms a Glycyl lysine isopeptide (Lys-Gly) (interchain with G-Cter in ubiquitin); alternate linkage. The residue at position 204 (Ser-204) is a Phosphoserine. Lys-209 participates in a covalent cross-link: Glycyl lysine isopeptide (Lys-Gly) (interchain with G-Cter in ubiquitin). Lys-223 bears the N6-acetyllysine; alternate mark. A Glycyl lysine isopeptide (Lys-Gly) (interchain with G-Cter in ubiquitin); alternate cross-link involves residue Lys-223. Phosphoserine is present on residues Ser-227 and Ser-231. The residue at position 232 (Lys-232) is an N6-acetyllysine. Cys-233 and Cys-264 form a disulfide bridge. A Phosphoserine modification is found at Ser-235. Residue Lys-240 is modified to N6-acetyllysine; alternate. Lys-240 participates in a covalent cross-link: Glycyl lysine isopeptide (Lys-Gly) (interchain with G-Cter in ubiquitin); alternate. Ser-247 bears the Phosphoserine mark. An N6,N6-dimethyllysine; alternate modification is found at Lys-253. An N6-acetyllysine; alternate mark is found at Lys-253, Lys-259, and Lys-263. Residues Lys-253, Lys-259, and Lys-263 each participate in a glycyl lysine isopeptide (Lys-Gly) (interchain with G-Cter in ubiquitin); alternate cross-link. The residue at position 266 (Ser-266) is a Phosphoserine. Lys-273, Lys-285, and Lys-289 each carry N6-acetyllysine; alternate. Glycyl lysine isopeptide (Lys-Gly) (interchain with G-Cter in ubiquitin); alternate cross-links involve residues Lys-273, Lys-285, and Lys-289. Omega-N-methylarginine is present on Arg-291. At Ser-294 the chain carries Phosphoserine. Lys-295 participates in a covalent cross-link: Glycyl lysine isopeptide (Lys-Gly) (interchain with G-Cter in ubiquitin). At Ser-298 the chain carries Phosphoserine. Lys-311 carries the post-translational modification N6-acetyllysine; alternate. Lys-311 is covalently cross-linked (Glycyl lysine isopeptide (Lys-Gly) (interchain with G-Cter in ubiquitin); alternate). Lys-317 is covalently cross-linked (Glycyl lysine isopeptide (Lys-Gly) (interchain with G-Cter in ubiquitin)). Lys-327 is modified (N6-acetyllysine; alternate). Lys-327 is covalently cross-linked (Glycyl lysine isopeptide (Lys-Gly) (interchain with G-Cter in ubiquitin); alternate). Phosphotyrosine is present on Tyr-336. Residues Ser-338 and Ser-342 each carry the phosphoserine modification. Residues Val-340–Ile-359 are disordered. Residues Gly-343–Ser-358 are compositionally biased toward polar residues. Residue Thr-345 is modified to Phosphothreonine. Phosphoserine is present on residues Ser-346, Ser-351, Ser-358, and Ser-364. A Phosphothreonine modification is found at Thr-369.

As to quaternary structure, interacts with MARK1, MARK2, MARK3 and MARK4. Interacts with SQSTM1 when polyubiquitinated. Interacts with PSMC2 through SQSTM1. Interacts with FKBP4. Binds to CSNK1D. Interacts with SGK1. Interacts with PIN1. Interacts with LRRK2. Interacts with LRP1, leading to endocytosis; this interaction is reduced in the presence of LRPAP1/RAP. Post-translationally, polyubiquitinated. Requires functional TRAF6 and may provoke SQSTM1-dependent degradation by the proteasome. In terms of processing, phosphorylation at various serine and threonine residues in S-P or T-P motifs by proline-directed protein kinases (PDPK1, CDK1, CDK5, GSK3, MAPK) (a few sites per protein in interphase, more in mitosis), and at serine residues in K-X-G-S motifs by MAP/microtubule affinity-regulating kinase (MARK1, MARK2, MARK3 or MARK4), causing detachment from microtubules, and their disassembly. Phosphorylation at Ser-204 by BRSK1 and BRSK2 in neurons affects ability to bind microtubules and plays a role in neuron polarization. Phosphorylated by PHK. Dephosphorylation at several serine and threonine residues by the serine/threonine phosphatase PPP5C. In terms of tissue distribution, expressed in neurons.

The protein resides in the cytoplasm. It localises to the cytosol. The protein localises to the cell membrane. It is found in the cytoskeleton. Its subcellular location is the cell projection. The protein resides in the axon. It localises to the dendrite. Functionally, promotes microtubule assembly and stability, and might be involved in the establishment and maintenance of neuronal polarity. The C-terminus binds axonal microtubules while the N-terminus binds neural plasma membrane components, suggesting that tau functions as a linker protein between both. Axonal polarity is predetermined by tau localization (in the neuronal cell) in the domain of the cell body defined by the centrosome. This Papio hamadryas (Hamadryas baboon) protein is Microtubule-associated protein tau (MAPT).